A 130-amino-acid chain; its full sequence is Protein ApaG (130 aa).

The ApaG domain maps to Ser-3–Arg-127.

The chain is Protein ApaG from Brucella abortus (strain S19).